An 880-amino-acid polypeptide reads, in one-letter code: Alanine--tRNA ligase (880 aa).

Positions 566, 570, 668, and 672 each coordinate Zn(2+).

The protein belongs to the class-II aminoacyl-tRNA synthetase family. It depends on Zn(2+) as a cofactor.

The protein resides in the cytoplasm. The enzyme catalyses tRNA(Ala) + L-alanine + ATP = L-alanyl-tRNA(Ala) + AMP + diphosphate. In terms of biological role, catalyzes the attachment of alanine to tRNA(Ala) in a two-step reaction: alanine is first activated by ATP to form Ala-AMP and then transferred to the acceptor end of tRNA(Ala). Also edits incorrectly charged Ser-tRNA(Ala) and Gly-tRNA(Ala) via its editing domain. The polypeptide is Alanine--tRNA ligase (Parafrankia sp. (strain EAN1pec)).